Reading from the N-terminus, the 172-residue chain is Crossover junction endodeoxyribonuclease RuvC (172 aa).

Residues aspartate 8, glutamate 67, and aspartate 139 contribute to the active site. Residues aspartate 8, glutamate 67, and aspartate 139 each contribute to the Mg(2+) site.

It belongs to the RuvC family. Homodimer which binds Holliday junction (HJ) DNA. The HJ becomes 2-fold symmetrical on binding to RuvC with unstacked arms; it has a different conformation from HJ DNA in complex with RuvA. In the full resolvosome a probable DNA-RuvA(4)-RuvB(12)-RuvC(2) complex forms which resolves the HJ. It depends on Mg(2+) as a cofactor.

The protein localises to the cytoplasm. It carries out the reaction Endonucleolytic cleavage at a junction such as a reciprocal single-stranded crossover between two homologous DNA duplexes (Holliday junction).. In terms of biological role, the RuvA-RuvB-RuvC complex processes Holliday junction (HJ) DNA during genetic recombination and DNA repair. Endonuclease that resolves HJ intermediates. Cleaves cruciform DNA by making single-stranded nicks across the HJ at symmetrical positions within the homologous arms, yielding a 5'-phosphate and a 3'-hydroxyl group; requires a central core of homology in the junction. The consensus cleavage sequence is 5'-(A/T)TT(C/G)-3'. Cleavage occurs on the 3'-side of the TT dinucleotide at the point of strand exchange. HJ branch migration catalyzed by RuvA-RuvB allows RuvC to scan DNA until it finds its consensus sequence, where it cleaves and resolves the cruciform DNA. In Hahella chejuensis (strain KCTC 2396), this protein is Crossover junction endodeoxyribonuclease RuvC.